The chain runs to 367 residues: Molybdopterin synthase catalytic subunit (367 aa).

Substrate contacts are provided by residues 101-102 (HR), Lys-117, and 124-126 (KKE).

Belongs to the MoaE family. MOCS2B subfamily. As to quaternary structure, heterotetramer; composed of 2 small (Mocs2A) and 2 large (Mocs2B) subunits.

The protein localises to the cytoplasm. It catalyses the reaction 2 [molybdopterin-synthase sulfur-carrier protein]-C-terminal-Gly-aminoethanethioate + cyclic pyranopterin phosphate + H2O = molybdopterin + 2 [molybdopterin-synthase sulfur-carrier protein]-C-terminal Gly-Gly + 2 H(+). Its pathway is cofactor biosynthesis; molybdopterin biosynthesis. In terms of biological role, catalytic subunit of the molybdopterin synthase complex, a complex that catalyzes the conversion of precursor Z into molybdopterin. Acts by mediating the incorporation of 2 sulfur atoms from thiocarboxylated Mocs2A into precursor Z to generate a dithiolene group. The protein is Molybdopterin synthase catalytic subunit of Drosophila erecta (Fruit fly).